A 377-amino-acid chain; its full sequence is Alanine dehydrogenase (377 aa).

2 residues coordinate substrate: R15 and K74. The active-site Proton donor/acceptor is H95. NAD(+)-binding positions include S133, D197, R202, S219, 238-239 (VL), 266-269 (VAID), and 304-307 (VGNM). The Proton donor/acceptor role is filled by D269.

This sequence belongs to the AlaDH/PNT family. As to quaternary structure, homohexamer.

The enzyme catalyses L-alanine + NAD(+) + H2O = pyruvate + NH4(+) + NADH + H(+). It functions in the pathway organosulfur degradation; alkanesulfonate degradation. Involved in an anaerobic respiration pathway that converts the sulfonate taurine (2-aminoethanesulfonate) to ammonia, acetate and sulfide. Acts as an alanine dehydrogenase that regenerates pyruvate, the amino group acceptor for the taurine--pyruvate aminotransferase enzyme, and liberates ammonia. The polypeptide is Alanine dehydrogenase (Bilophila wadsworthia (strain 3_1_6)).